Consider the following 343-residue polypeptide: 3-oxopimeloyl-[acyl-carrier-protein] synthase (343 aa).

Residues Cys132 and His272 contribute to the active site. The tract at residues Gln273–Arg277 is ACP-binding. Asn302 is an active-site residue.

It belongs to the thiolase-like superfamily. BioZ family.

It catalyses the reaction malonyl-[ACP] + an acyl-CoA + H(+) = a 3-oxoacyl-[ACP] + CO2 + CoA. The enzyme catalyses glutaryl-CoA + malonyl-[ACP] + H(+) = 3-oxo-6-carboxyhexanoyl-[ACP] + CO2 + CoA. Its pathway is cofactor biosynthesis; biotin biosynthesis. Involved in the formation of the biotin precursor pimeloyl-ACP. Catalyzes the condensation of glutaryl-CoA, an intermediate in lysine degradation, with malonyl-ACP to produce 3-oxopimeloyl-ACP. This chain is 3-oxopimeloyl-[acyl-carrier-protein] synthase, found in Rhodothermus marinus (strain ATCC 43812 / DSM 4252 / R-10) (Rhodothermus obamensis).